We begin with the raw amino-acid sequence, 127 residues long: MTITMLKSKIHRATVTEANLNYVGSITIDKNLMDKANILEYEKVQIVDIDNGNRFETYVIAGEKHSGVICLNGAAARMVQKGDKIIIMSYCDLTIDEANKFNPTVLFVDNKNNIEKLTNYEKHGEII.

Serine 25 serves as the catalytic Schiff-base intermediate with substrate; via pyruvic acid. Residue serine 25 is modified to Pyruvic acid (Ser). Residue threonine 57 participates in substrate binding. Residue tyrosine 58 is the Proton donor of the active site. 73–75 (GAA) is a substrate binding site.

This sequence belongs to the PanD family. As to quaternary structure, heterooctamer of four alpha and four beta subunits. It depends on pyruvate as a cofactor. In terms of processing, is synthesized initially as an inactive proenzyme, which is activated by self-cleavage at a specific serine bond to produce a beta-subunit with a hydroxyl group at its C-terminus and an alpha-subunit with a pyruvoyl group at its N-terminus.

The protein resides in the cytoplasm. The catalysed reaction is L-aspartate + H(+) = beta-alanine + CO2. It functions in the pathway cofactor biosynthesis; (R)-pantothenate biosynthesis; beta-alanine from L-aspartate: step 1/1. Catalyzes the pyruvoyl-dependent decarboxylation of aspartate to produce beta-alanine. This Clostridium botulinum (strain 657 / Type Ba4) protein is Aspartate 1-decarboxylase.